We begin with the raw amino-acid sequence, 107 residues long: Thioredoxin 1 (107 aa).

The 106-residue stretch at S2 to L107 folds into the Thioredoxin domain. An intrachain disulfide couples C32 to C35.

This sequence belongs to the thioredoxin family.

Participates in various redox reactions through the reversible oxidation of its active center dithiol to a disulfide and catalyzes dithiol-disulfide exchange reactions. This chain is Thioredoxin 1 (trxA), found in Nostoc sp. (strain PCC 7120 / SAG 25.82 / UTEX 2576).